Consider the following 32-residue polypeptide: Secreted protein F2 (32 aa).

Its subcellular location is the secreted. The chain is Secreted protein F2 from Globisporangium hypogynum (Pythium hypogynum).